Here is a 299-residue protein sequence, read N- to C-terminus: Protein LacX, chromosomal (299 aa).

The polypeptide is Protein LacX, chromosomal (lacX) (Lactococcus lactis subsp. lactis (Streptococcus lactis)).